The sequence spans 546 residues: Chaperonin GroEL 1 (546 aa).

Residues 30 to 33 (TLGP), Lys51, 87 to 91 (DGTTT), Gly415, 479 to 481 (NAA), and Asp495 each bind ATP. A disordered region spans residues 526 to 546 (KEDAPMPGGMPGGMGGMGMDM). The span at 534–546 (GMPGGMGGMGMDM) shows a compositional bias: gly residues.

The protein belongs to the chaperonin (HSP60) family. Forms a cylinder of 14 subunits composed of two heptameric rings stacked back-to-back. Interacts with the co-chaperonin GroES.

It localises to the cytoplasm. It catalyses the reaction ATP + H2O + a folded polypeptide = ADP + phosphate + an unfolded polypeptide.. Its function is as follows. Together with its co-chaperonin GroES, plays an essential role in assisting protein folding. The GroEL-GroES system forms a nano-cage that allows encapsulation of the non-native substrate proteins and provides a physical environment optimized to promote and accelerate protein folding. This chain is Chaperonin GroEL 1, found in Burkholderia vietnamiensis (strain G4 / LMG 22486) (Burkholderia cepacia (strain R1808)).